Here is a 270-residue protein sequence, read N- to C-terminus: Flavodoxin/ferredoxin--NADP reductase (270 aa).

One can recognise an FAD-binding FR-type domain in the interval 12 to 113; it reads VLPDAQTVTS…PKPVGTLVID (102 aa). Residues 62–65, 78–80, and 86–88 each bind FAD; these read RAYS, YSI, and PLT. Thr-126 is a binding site for NADP(+). Thr-128 contacts FAD. Residues Arg-156, 192-193, Arg-201, and Asp-238 contribute to the NADP(+) site; that span reads TR. 264 to 270 serves as a coordination point for FAD; it reads AFVGEGI.

The protein belongs to the ferredoxin--NADP reductase type 1 family. As to quaternary structure, monomer. FAD serves as cofactor.

It localises to the cytoplasm. It carries out the reaction 2 reduced [2Fe-2S]-[ferredoxin] + NADP(+) + H(+) = 2 oxidized [2Fe-2S]-[ferredoxin] + NADPH. The enzyme catalyses reduced [flavodoxin] + NADP(+) = oxidized [flavodoxin] + NADPH + 2 H(+). Transports electrons between flavodoxin or ferredoxin and NADPH. In Rhodobacter capsulatus (Rhodopseudomonas capsulata), this protein is Flavodoxin/ferredoxin--NADP reductase.